Reading from the N-terminus, the 349-residue chain is Methylthioribose-1-phosphate isomerase (349 aa).

Residues 49–51 (RGA), Arg-93, and Gln-201 each bind substrate. The active-site Proton donor is Asp-242. Substrate is bound at residue 252–253 (NK).

It belongs to the EIF-2B alpha/beta/delta subunits family. MtnA subfamily.

The enzyme catalyses 5-(methylsulfanyl)-alpha-D-ribose 1-phosphate = 5-(methylsulfanyl)-D-ribulose 1-phosphate. The protein operates within amino-acid biosynthesis; L-methionine biosynthesis via salvage pathway; L-methionine from S-methyl-5-thio-alpha-D-ribose 1-phosphate: step 1/6. Functionally, catalyzes the interconversion of methylthioribose-1-phosphate (MTR-1-P) into methylthioribulose-1-phosphate (MTRu-1-P). This Petrotoga mobilis (strain DSM 10674 / SJ95) protein is Methylthioribose-1-phosphate isomerase.